We begin with the raw amino-acid sequence, 736 residues long: Na(+)/H(+) antiporter NhaA (736 aa).

A na(+)/H(+) antiporter NhaA region spans residues 1-387; that stretch reads MNHSPQSARP…ICGYLLLRAA (387 aa). 12 helical membrane-spanning segments follow: residues 23–43, 58–78, 96–116, 126–146, 155–175, 178–198, 201–221, 224–244, 265–285, 298–318, 334–354, and 367–387; these read AGGI…NSPF, LSLA…LVGL, MLPG…FAVL, GWAV…SLLG, VFLA…IAIF, AEIS…LFVM, MGVV…FFVF, GVHA…KPAP, VAFI…FKGL, ILLG…WLAI, LYGV…IGLL, and IGVL…LRAA. The peptidase S49 stretch occupies residues 388–736; the sequence is RPDQSAANPL…EKAIWARYGL (349 aa).

The protein in the N-terminal section; belongs to the NhaA Na(+)/H(+) (TC 2.A.33) antiporter family. In the C-terminal section; belongs to the peptidase S49 family.

The protein resides in the cell inner membrane. It carries out the reaction Na(+)(in) + 2 H(+)(out) = Na(+)(out) + 2 H(+)(in). In terms of biological role, na(+)/H(+) antiporter that extrudes sodium in exchange for external protons. This is Na(+)/H(+) antiporter NhaA from Brucella abortus (strain 2308).